The sequence spans 652 residues: UvrABC system protein C (652 aa).

A GIY-YIG domain is found at 37–116 (KSSGCYLFKD…IKTNKPYFNI (80 aa)). Residues 226-261 (DDLEIFLQKKMLQFSNDLDYENAAKIRDQISGLKLL) enclose the UVR domain.

It belongs to the UvrC family. As to quaternary structure, interacts with UvrB in an incision complex.

It localises to the cytoplasm. In terms of biological role, the UvrABC repair system catalyzes the recognition and processing of DNA lesions. UvrC both incises the 5' and 3' sides of the lesion. The N-terminal half is responsible for the 3' incision and the C-terminal half is responsible for the 5' incision. The protein is UvrABC system protein C of Prochlorococcus marinus (strain MIT 9312).